Consider the following 170-residue polypeptide: Photosystem I assembly protein Ycf3 (170 aa).

TPR repeat units lie at residues 35–68, 72–105, and 120–153; these read AFTY…EVDA, SYIL…NPSL, and GEQA…APTN.

This sequence belongs to the Ycf3 family.

It localises to the plastid. The protein localises to the chloroplast thylakoid membrane. Functionally, essential for the assembly of the photosystem I (PSI) complex. May act as a chaperone-like factor to guide the assembly of the PSI subunits. The sequence is that of Photosystem I assembly protein Ycf3 from Tetradesmus obliquus (Green alga).